The primary structure comprises 391 residues: Phosphoprotein (391 aa).

T10 and T16 each carry phosphothreonine. Polar residues predominate over residues 54 to 65 (QKNIQHPTASHQ). Disordered regions lie at residues 54–98 (QKNI…EPLF) and 148–184 (PVTE…KERS). Phosphoserine is present on S69. A phosphothreonine mark is found at T91, T150, and T165. S188 carries the phosphoserine modification. Positions 216–279 (ISANEIMDLL…MATVKIMDPG (64 aa)) are multimerization. A coiled-coil region spans residues 218-245 (ANEIMDLLRGMDARLQHLEQKVDKVLAQ). T250 is subject to Phosphothreonine. A Phosphoserine modification is found at S257. 2 positions are modified to phosphothreonine: T258 and T282. S292 and S294 each carry phosphoserine. T298 carries the phosphothreonine modification. A phosphoserine mark is found at S301 and S374. The interaction with the nucleoprotein stretch occupies residues 343–391 (AGRKVMITKMITDCVANPQMKQAFEQRLAKASTEDALNDIKRDIIRSAI). T375 carries the phosphothreonine modification.

Belongs to the rubulavirus/avulavirus P protein family. Homotetramer. Interacts (via multimerization domain) with polymerase L; this interaction forms the polymerase L-P complex. Interacts (via N-terminus) with N0 (via Ncore); this interaction allows P to chaperon N0 to avoid N polymerization before encapsidation. Interacts (via C-terminus) with N-RNA template; this interaction positions the polymerase on the template for both transcription and replication. Interacts with host RPS6KB1 kinase; this interaction may play a role in the viral replication and transcription.

Functionally, essential cofactor of the RNA polymerase L that plays a central role in the transcription and replication by forming the polymerase complex with RNA polymerase L and recruiting L to the genomic N-RNA template for RNA synthesis. Also plays a central role in the encapsidation of nascent RNA chains by forming the encapsidation complex with the nucleocapsid protein N (N-P complex). Acts as a chaperone for newly synthesized free N protein, so-called N0, allowing encapsidation of nascent RNA chains during replication. The nucleoprotein protein N prevents excessive phosphorylation of P, which leads to down-regulation of viral transcription/ replication. Participates, together with N, in the formation of viral factories (viroplasms), which are large inclusions in the host cytoplasm where replication takes place. The sequence is that of Phosphoprotein from Mumps virus (strain Enders) (MuV).